Here is a 141-residue protein sequence, read N- to C-terminus: Ribonuclease P protein component (141 aa).

Disordered regions lie at residues 37 to 56 and 114 to 141; these read RTEE…VGFT and RRIT…VNGK. Residues 114–124 are compositionally biased toward basic and acidic residues; sequence RRITAKGERRS.

This sequence belongs to the RnpA family. Consists of a catalytic RNA component (M1 or rnpB) and a protein subunit.

It catalyses the reaction Endonucleolytic cleavage of RNA, removing 5'-extranucleotides from tRNA precursor.. In terms of biological role, RNaseP catalyzes the removal of the 5'-leader sequence from pre-tRNA to produce the mature 5'-terminus. It can also cleave other RNA substrates such as 4.5S RNA. The protein component plays an auxiliary but essential role in vivo by binding to the 5'-leader sequence and broadening the substrate specificity of the ribozyme. The protein is Ribonuclease P protein component of Brucella melitensis biotype 1 (strain ATCC 23456 / CCUG 17765 / NCTC 10094 / 16M).